Reading from the N-terminus, the 233-residue chain is Orotidine 5'-phosphate decarboxylase (233 aa).

Substrate contacts are provided by residues Asp13, Lys35, 62–71 (DLKFHDIPNT), Thr122, Arg182, Gln191, Gly211, and Arg212. Lys64 serves as the catalytic Proton donor.

The protein belongs to the OMP decarboxylase family. Type 1 subfamily. As to quaternary structure, homodimer.

It catalyses the reaction orotidine 5'-phosphate + H(+) = UMP + CO2. Its pathway is pyrimidine metabolism; UMP biosynthesis via de novo pathway; UMP from orotate: step 2/2. Functionally, catalyzes the decarboxylation of orotidine 5'-monophosphate (OMP) to uridine 5'-monophosphate (UMP). This Pseudomonas entomophila (strain L48) protein is Orotidine 5'-phosphate decarboxylase.